A 227-amino-acid polypeptide reads, in one-letter code: Ribose-5-phosphate isomerase A (227 aa).

Residues 28-31 (TGST), 84-87 (DGAD), and 97-100 (KGGG) each bind substrate. Catalysis depends on glutamate 106, which acts as the Proton acceptor. Lysine 124 contributes to the substrate binding site.

It belongs to the ribose 5-phosphate isomerase family. Homodimer.

It catalyses the reaction aldehydo-D-ribose 5-phosphate = D-ribulose 5-phosphate. It participates in carbohydrate degradation; pentose phosphate pathway; D-ribose 5-phosphate from D-ribulose 5-phosphate (non-oxidative stage): step 1/1. Functionally, catalyzes the reversible conversion of ribose-5-phosphate to ribulose 5-phosphate. This Lactiplantibacillus plantarum (strain ATCC BAA-793 / NCIMB 8826 / WCFS1) (Lactobacillus plantarum) protein is Ribose-5-phosphate isomerase A.